We begin with the raw amino-acid sequence, 274 residues long: Large ribosomal subunit protein uL2cz/uL2cy (274 aa).

2 disordered regions span residues 1–23 and 224–274; these read MAIH…SQVK and NPVD…RRSK.

This sequence belongs to the universal ribosomal protein uL2 family. Part of the 50S ribosomal subunit.

Its subcellular location is the plastid. The protein resides in the chloroplast. This chain is Large ribosomal subunit protein uL2cz/uL2cy (rpl2-A), found in Vitis vinifera (Grape).